Consider the following 312-residue polypeptide: TATA box-binding protein-like 2 (312 aa).

The disordered stretch occupies residues Asp-65–Leu-115. Over residues Gln-75 to Asp-84 the composition is skewed to basic and acidic residues. Polar residues predominate over residues Lys-94–Leu-115.

This sequence belongs to the TBP family. In terms of tissue distribution, in adults, expressed in the gonads, with expression much higher in the ovary than the testis (at protein level). Shows a small amount of expression in other adult organs, including the brain and kidney. Embryonic expression is mostly ubiquitous except in early gastrula embryos where expression is asymmetric.

The protein resides in the nucleus. Its function is as follows. TATA box-binding transcription factor. Members of the TBP family are differentially required to regulate transcription and development during early embryogenesis. Commits mesoderm to the hematopoietic lineage during hemopoiesis, acting via mespa. Binds to the mespa promoter. The protein is TATA box-binding protein-like 2 of Danio rerio (Zebrafish).